We begin with the raw amino-acid sequence, 142 residues long: Endoribonuclease YbeY (142 aa).

Residues histidine 107, histidine 111, and aspartate 117 each coordinate Zn(2+).

Belongs to the endoribonuclease YbeY family. Requires Zn(2+) as cofactor.

The protein resides in the cytoplasm. Single strand-specific metallo-endoribonuclease involved in late-stage 70S ribosome quality control and in maturation of the 3' terminus of the 16S rRNA. The protein is Endoribonuclease YbeY of Parabacteroides distasonis (strain ATCC 8503 / DSM 20701 / CIP 104284 / JCM 5825 / NCTC 11152).